Consider the following 207-residue polypeptide: Metalloproteinase inhibitor 1 (207 aa).

The N-terminal stretch at 1 to 23 (MAPLAALASSMLLLLWLVAPSRA) is a signal peptide. C24 contacts Zn(2+). An involved in metalloproteinase-binding region spans residues 24–27 (CTCV). 6 cysteine pairs are disulfide-bonded: C24–C93, C26–C122, C36–C147, C150–C197, C155–C160, and C168–C189. One can recognise an NTR domain in the interval 24-147 (CTCVPPHPQT…GFTKTYAAGC (124 aa)). N-linked (GlcNAc...) asparagine glycosylation is present at N53. The involved in metalloproteinase-binding stretch occupies residues 90 to 91 (ES). A glycan (N-linked (GlcNAc...) asparagine) is linked at N101. S178 is modified (phosphoserine).

Belongs to the protease inhibitor I35 (TIMP) family. Interacts with MMP1, MMP3, MMP10 and MMP13, but has only very low affinity for MMP14. Interacts with CD63; identified in a complex with CD63 and ITGB1. In terms of processing, the activity of TIMP1 is dependent on the presence of disulfide bonds. Post-translationally, N-glycosylated.

Its subcellular location is the secreted. In terms of biological role, metalloproteinase inhibitor that functions by forming one to one complexes with target metalloproteinases, such as collagenases, and irreversibly inactivates them by binding to their catalytic zinc cofactor. Acts on MMP1, MMP2, MMP3, MMP7, MMP8, MMP9, MMP10, MMP11, MMP12, MMP13 and MMP16. Does not act on MMP14. Also functions as a growth factor that regulates cell differentiation, migration and cell death and activates cellular signaling cascades via CD63 and ITGB1. Plays a role in integrin signaling. The sequence is that of Metalloproteinase inhibitor 1 (TIMP1) from Oryctolagus cuniculus (Rabbit).